The chain runs to 260 residues: Indole-3-glycerol phosphate synthase (260 aa).

The protein belongs to the TrpC family.

It carries out the reaction 1-(2-carboxyphenylamino)-1-deoxy-D-ribulose 5-phosphate + H(+) = (1S,2R)-1-C-(indol-3-yl)glycerol 3-phosphate + CO2 + H2O. Its pathway is amino-acid biosynthesis; L-tryptophan biosynthesis; L-tryptophan from chorismate: step 4/5. The polypeptide is Indole-3-glycerol phosphate synthase (Desulfotalea psychrophila (strain LSv54 / DSM 12343)).